A 254-amino-acid polypeptide reads, in one-letter code: Phosphatidylglycerol--prolipoprotein diacylglyceryl transferase (254 aa).

Helical transmembrane passes span 11–31, 49–69, and 84–104; these read LAIRWYGVIISIGAALGLLLA, FLIAFPSAIIGARLYYVIFEF, and QGGLAIHGGIIFGVLAVYIYL. A 1,2-diacyl-sn-glycero-3-phospho-(1'-sn-glycerol) is bound at residue R130. A run of 3 helical transmembrane segments spans residues 169 to 189, 196 to 216, and 228 to 248; these read PTFLYESIWNFIVCIFLVYLL, GIVFMAYIGLYSLGRFFIEGL, and VAQLISVLGIILSIFFIYNII.

It belongs to the Lgt family.

Its subcellular location is the cell membrane. The enzyme catalyses L-cysteinyl-[prolipoprotein] + a 1,2-diacyl-sn-glycero-3-phospho-(1'-sn-glycerol) = an S-1,2-diacyl-sn-glyceryl-L-cysteinyl-[prolipoprotein] + sn-glycerol 1-phosphate + H(+). Its pathway is protein modification; lipoprotein biosynthesis (diacylglyceryl transfer). Catalyzes the transfer of the diacylglyceryl group from phosphatidylglycerol to the sulfhydryl group of the N-terminal cysteine of a prolipoprotein, the first step in the formation of mature lipoproteins. The protein is Phosphatidylglycerol--prolipoprotein diacylglyceryl transferase of Clostridium botulinum (strain Loch Maree / Type A3).